We begin with the raw amino-acid sequence, 567 residues long: Glucose-6-phosphate isomerase, cytosolic A (567 aa).

Residues 156 to 157 (GS), 212 to 217 (SKTFTT), Q356, E360, H391, and K516 each bind D-glucose 6-phosphate. E360 serves as the catalytic Proton donor. Catalysis depends on residues H391 and K516.

Belongs to the GPI family. In terms of assembly, homodimer.

The protein localises to the cytoplasm. The catalysed reaction is alpha-D-glucose 6-phosphate = beta-D-fructose 6-phosphate. The protein operates within carbohydrate degradation; glycolysis; D-glyceraldehyde 3-phosphate and glycerone phosphate from D-glucose: step 2/4. In terms of biological role, catalyzes the conversion of glucose-6-phosphate to fructose-6-phosphate, the second step in glycolysis, and the reverse reaction during gluconeogenesis. This chain is Glucose-6-phosphate isomerase, cytosolic A, found in Oryza sativa subsp. japonica (Rice).